The following is an 85-amino-acid chain: Large ribosomal subunit protein bL31B (85 aa).

It belongs to the bacterial ribosomal protein bL31 family. Type B subfamily. Part of the 50S ribosomal subunit.

The chain is Large ribosomal subunit protein bL31B from Serratia proteamaculans (strain 568).